A 538-amino-acid polypeptide reads, in one-letter code: MTDLNKLVKELNDLGLTDVKEIVYNPSYEQLFEEETKPGLEGFDKGTLTTLGAVAVDTGIFTGRSPKDKYIVCDETTKDTVWWNSEAAKNDNKPMTQETWKSLRELVAKQLSGKRLFVVEGYCGASEKHRIGVRMVTEVAWQAHFVKNMFIRPTDEELKNFKADFTVLNGAKCTNPNWKEQGLNSENFVAFNITEGIQLIGGTWYGGEMKKGMFSMMNYFLPLKGVASMHCSANVGKDGDVAIFFGLSGTGKTTLSTDPKRQLIGDDEHGWDESGVFNFEGGCYAKTINLSQENEPDIYGAIRRDALLENVVVRADGSVDFDDGSKTENTRVSYPIYHIDNIVRPVSKAGHATKVIFLTADAFGVLPPVSKLTPEQTEYYFLSGFTAKLAGTERGVTEPTPTFSACFGAAFLSLHPIQYADVLVERMKASGAEAYLVNTGWNGTGKRISIKDTRGIIDAILDGSIEKAEMGELPIFNLAIPKALPGVDPAILDPRDTYADKAQWQVKAEDLANRFVKNFVKYTANPEAAKLVGAGPKA.

A substrate-binding site is contributed by Arg64. An ATP-binding site is contributed by Arg152. The substrate site is built by Tyr205 and Lys211. ATP contacts are provided by residues Lys211, His230, and 246-254; that span reads GLSGTGKTT. The Mn(2+) site is built by Lys211 and His230. Asp267 provides a ligand contact to Mn(2+). Residues Glu295, Arg331, Arg344, 447 to 448, and Thr453 contribute to the ATP site; that span reads RI. Residue Arg331 participates in substrate binding.

The protein belongs to the phosphoenolpyruvate carboxykinase (ATP) family. As to quaternary structure, monomer. The cofactor is Mn(2+).

It localises to the cytoplasm. It catalyses the reaction oxaloacetate + ATP = phosphoenolpyruvate + ADP + CO2. The protein operates within carbohydrate biosynthesis; gluconeogenesis. Its function is as follows. Involved in gluconeogenesis. Catalyzes the conversion of oxaloacetate (OAA) to phosphoenolpyruvate (PEP) through direct phosphoryl transfer between the nucleoside triphosphate and OAA. This chain is Phosphoenolpyruvate carboxykinase (ATP), found in Actinobacillus succinogenes (strain ATCC 55618 / DSM 22257 / CCUG 43843 / 130Z).